We begin with the raw amino-acid sequence, 139 residues long: MHRSTLPKRARVLKRKQFLYISRTGSHCQGSQVIFQVAPSKYPGCCKLGITVSKKFGKAHKRNYFKRLVREAFRQKRHSLPACQIVVMPKNKQQPRFRDLLQDFSQQIPEAVESKCAKNKLTTGVEYNPKNEKCETAPL.

Belongs to the RnpA family. As to quaternary structure, consists of a catalytic RNA component (M1 or rnpB) and a protein subunit.

The catalysed reaction is Endonucleolytic cleavage of RNA, removing 5'-extranucleotides from tRNA precursor.. RNaseP catalyzes the removal of the 5'-leader sequence from pre-tRNA to produce the mature 5'-terminus. It can also cleave other RNA substrates such as 4.5S RNA. The protein component plays an auxiliary but essential role in vivo by binding to the 5'-leader sequence and broadening the substrate specificity of the ribozyme. The polypeptide is Ribonuclease P protein component (Chlamydia felis (strain Fe/C-56) (Chlamydophila felis)).